Reading from the N-terminus, the 570-residue chain is Urease subunit alpha (570 aa).

One can recognise a Urease domain in the interval 131–570 (GGFDAHIHFI…LPMAQRYFLF (440 aa)). The Ni(2+) site is built by His-136, His-138, and Lys-219. At Lys-219 the chain carries N6-carboxylysine. His-221 lines the substrate pocket. Ni(2+) is bound by residues His-248 and His-274. The active-site Proton donor is the His-322. Asp-362 is a binding site for Ni(2+).

The protein belongs to the metallo-dependent hydrolases superfamily. Urease alpha subunit family. Heterotrimer of UreA (gamma), UreB (beta) and UreC (alpha) subunits. Three heterotrimers associate to form the active enzyme. The cofactor is Ni cation. Post-translationally, carboxylation allows a single lysine to coordinate two nickel ions.

It localises to the cytoplasm. It catalyses the reaction urea + 2 H2O + H(+) = hydrogencarbonate + 2 NH4(+). It functions in the pathway nitrogen metabolism; urea degradation; CO(2) and NH(3) from urea (urease route): step 1/1. The sequence is that of Urease subunit alpha from Mesorhizobium japonicum (strain LMG 29417 / CECT 9101 / MAFF 303099) (Mesorhizobium loti (strain MAFF 303099)).